We begin with the raw amino-acid sequence, 476 residues long: ATP synthase subunit beta (476 aa).

153–160 (GGAGVGKT) contacts ATP.

The protein belongs to the ATPase alpha/beta chains family. As to quaternary structure, F-type ATPases have 2 components, CF(1) - the catalytic core - and CF(0) - the membrane proton channel. CF(1) has five subunits: alpha(3), beta(3), gamma(1), delta(1), epsilon(1). CF(0) has three main subunits: a(1), b(2) and c(9-12). The alpha and beta chains form an alternating ring which encloses part of the gamma chain. CF(1) is attached to CF(0) by a central stalk formed by the gamma and epsilon chains, while a peripheral stalk is formed by the delta and b chains.

It localises to the cell membrane. It catalyses the reaction ATP + H2O + 4 H(+)(in) = ADP + phosphate + 5 H(+)(out). Its function is as follows. Produces ATP from ADP in the presence of a proton gradient across the membrane. The catalytic sites are hosted primarily by the beta subunits. The protein is ATP synthase subunit beta of Latilactobacillus sakei subsp. sakei (strain 23K) (Lactobacillus sakei subsp. sakei).